The chain runs to 130 residues: S-adenosylmethionine decarboxylase proenzyme (130 aa).

The active-site Schiff-base intermediate with substrate; via pyruvic acid is Ser-64. Residue Ser-64 is modified to Pyruvic acid (Ser); by autocatalysis. His-69 serves as the catalytic Proton acceptor; for processing activity. Cys-84 functions as the Proton donor; for catalytic activity in the catalytic mechanism.

This sequence belongs to the prokaryotic AdoMetDC family. Type 1 subfamily. In terms of assembly, heterotetramer of two alpha and two beta chains arranged as a dimer of alpha/beta heterodimers. Requires pyruvate as cofactor. Is synthesized initially as an inactive proenzyme. Formation of the active enzyme involves a self-maturation process in which the active site pyruvoyl group is generated from an internal serine residue via an autocatalytic post-translational modification. Two non-identical subunits are generated from the proenzyme in this reaction, and the pyruvate is formed at the N-terminus of the alpha chain, which is derived from the carboxyl end of the proenzyme. The post-translation cleavage follows an unusual pathway, termed non-hydrolytic serinolysis, in which the side chain hydroxyl group of the serine supplies its oxygen atom to form the C-terminus of the beta chain, while the remainder of the serine residue undergoes an oxidative deamination to produce ammonia and the pyruvoyl group blocking the N-terminus of the alpha chain.

It catalyses the reaction S-adenosyl-L-methionine + H(+) = S-adenosyl 3-(methylsulfanyl)propylamine + CO2. The protein operates within amine and polyamine biosynthesis; S-adenosylmethioninamine biosynthesis; S-adenosylmethioninamine from S-adenosyl-L-methionine: step 1/1. Functionally, catalyzes the decarboxylation of S-adenosylmethionine to S-adenosylmethioninamine (dcAdoMet), the propylamine donor required for the synthesis of the polyamines spermine and spermidine from the diamine putrescine. The protein is S-adenosylmethionine decarboxylase proenzyme of Picrophilus torridus (strain ATCC 700027 / DSM 9790 / JCM 10055 / NBRC 100828 / KAW 2/3).